We begin with the raw amino-acid sequence, 418 residues long: Light-independent protochlorophyllide reductase subunit N (418 aa).

Positions 17, 42, and 103 each coordinate [4Fe-4S] cluster.

This sequence belongs to the BchN/ChlN family. In terms of assembly, protochlorophyllide reductase is composed of three subunits; ChlL, ChlN and ChlB. Forms a heterotetramer of two ChlB and two ChlN subunits. [4Fe-4S] cluster serves as cofactor.

The catalysed reaction is chlorophyllide a + oxidized 2[4Fe-4S]-[ferredoxin] + 2 ADP + 2 phosphate = protochlorophyllide a + reduced 2[4Fe-4S]-[ferredoxin] + 2 ATP + 2 H2O. Its pathway is porphyrin-containing compound metabolism; chlorophyll biosynthesis (light-independent). In terms of biological role, component of the dark-operative protochlorophyllide reductase (DPOR) that uses Mg-ATP and reduced ferredoxin to reduce ring D of protochlorophyllide (Pchlide) to form chlorophyllide a (Chlide). This reaction is light-independent. The NB-protein (ChlN-ChlB) is the catalytic component of the complex. The protein is Light-independent protochlorophyllide reductase subunit N of Prochlorococcus marinus (strain MIT 9312).